Here is a 670-residue protein sequence, read N- to C-terminus: Small ribosomal subunit protein mS39 (670 aa).

A mitochondrion-targeting transit peptide spans 1 to 13; it reads MAAPCVRLGSVRC. PPR repeat units follow at residues 129–163, 164–199, 209–239, 240–274, 275–314, 315–351, 352–392, 396–430, 438–472, 473–507, and 556–590; these read VEGV…GTAP, SLET…EVQD, RPRQ…MPER, NAHS…RLTA, DVQT…NVRP, NLLT…NIEP, SLAT…FTLR, DVYF…DNRG, QSTY…LYYP, NSRG…GHSN, and SAGS…HRVP. Residues 187–213 form a disordered region; the sequence is IQTSEQEQQEVQDQQETEDPKKRPRQY. Positions 193-203 are enriched in acidic residues; it reads EQQEVQDQQET. Residues 648–670 form a disordered region; the sequence is EDLQKSHSSSSSSSSSSSDSDRE. Positions 653 to 670 are enriched in low complexity; that stretch reads SHSSSSSSSSSSSDSDRE.

Belongs to the mitochondrion-specific ribosomal protein mS39 family.

Its subcellular location is the mitochondrion. Its function is as follows. Mitochondrial protein that may have a role in mitochondrial translation. This is Small ribosomal subunit protein mS39 (ptcd3) from Xenopus tropicalis (Western clawed frog).